Reading from the N-terminus, the 269-residue chain is MNLNNLENIRYNEIKEFSDKIKKEFTFSQKKQVMDIIEKLNKDSRKNVIKLGQALEKFLNKYEEELKRTNNMYNFDRRYGNNYLIAGVDEVGRGPLAGPIVAAAVVLDLNVEEMQRIFNIKDSKKLSEKKREELDIIIREKAISYNIALVDNKTIDERGISWSNNEVLKRAVEGLKVKPDLVLSDGYAVKNLNIRNEFIIKGDSKSISIASSSIIAKVYRDSMMKEYSKGLNMYGFNHNAGYGTEEHVQAIKKHGPSKIHRMSFLTNIL.

The 187-residue stretch at 83-269 (YLIAGVDEVG…HRMSFLTNIL (187 aa)) folds into the RNase H type-2 domain. A divalent metal cation is bound by residues aspartate 89, glutamate 90, and aspartate 185.

This sequence belongs to the RNase HII family. The cofactor is Mn(2+). Mg(2+) is required as a cofactor.

It localises to the cytoplasm. The catalysed reaction is Endonucleolytic cleavage to 5'-phosphomonoester.. Endonuclease that specifically degrades the RNA of RNA-DNA hybrids. This chain is Ribonuclease HII, found in Clostridium botulinum (strain Hall / ATCC 3502 / NCTC 13319 / Type A).